Here is a 356-residue protein sequence, read N- to C-terminus: Glycerol-3-phosphate dehydrogenase [NAD(P)+] (356 aa).

Trp-12, Arg-32, Arg-33, and Lys-117 together coordinate NADPH. Sn-glycerol 3-phosphate-binding residues include Lys-117, Gly-151, and Ser-153. Ala-155 contacts NADPH. Lys-206, Asp-265, Arg-276, and Asn-277 together coordinate sn-glycerol 3-phosphate. The active-site Proton acceptor is Lys-206. NADPH is bound at residue Arg-276. The NADPH site is built by Leu-309 and Glu-311.

This sequence belongs to the NAD-dependent glycerol-3-phosphate dehydrogenase family.

The protein localises to the cytoplasm. The enzyme catalyses sn-glycerol 3-phosphate + NAD(+) = dihydroxyacetone phosphate + NADH + H(+). It carries out the reaction sn-glycerol 3-phosphate + NADP(+) = dihydroxyacetone phosphate + NADPH + H(+). It participates in membrane lipid metabolism; glycerophospholipid metabolism. Functionally, catalyzes the reduction of the glycolytic intermediate dihydroxyacetone phosphate (DHAP) to sn-glycerol 3-phosphate (G3P), the key precursor for phospholipid synthesis. The polypeptide is Glycerol-3-phosphate dehydrogenase [NAD(P)+] (Treponema pallidum (strain Nichols)).